Here is a 390-residue protein sequence, read N- to C-terminus: Protein PIN-LIKES 3 (390 aa).

At 1–14 the chain is on the lumenal side; that stretch reads MVKLLELFITSSKP. A helical transmembrane segment spans residues 15–35; sequence VVEILLITSVGFYMALDGVNL. Topologically, residues 36-43 are cytoplasmic; the sequence is LGHDARKY. A helical membrane pass occupies residues 44–61; sequence LNNIVFYVFSPSLIGSRL. Topologically, residues 62–76 are lumenal; that stretch reads ADSVTYESLVKMWFM. Residues 77–97 form a helical membrane-spanning segment; it reads PVNVLLTFIIGSLLGWIVIVI. The Cytoplasmic portion of the chain corresponds to 98–107; sequence TKPPSHLRGL. Residues 108–128 traverse the membrane as a helical segment; the sequence is ILGCCAAGNLGNMPLIIIPAV. Topologically, residues 129–144 are lumenal; sequence CKEKGGPFGDPESCQK. The helical transmembrane segment at 145-165 threads the bilayer; it reads YGMGYVALSMAMGSIYIWTYV. At 166–227 the chain is on the cytoplasmic side; it reads YNLMRVLSNS…SLSQKVNLKT (62 aa). A helical transmembrane segment spans residues 228–248; it reads IFAPSTIAAMIALVIGLITPL. The Lumenal portion of the chain corresponds to 249–265; the sequence is RKLIIGTEAPLRVLQDS. Residues 266 to 286 form a helical membrane-spanning segment; the sequence is VTLVGDGAVPAMTMIIGGNLL. Topologically, residues 287-297 are cytoplasmic; it reads KGLRSSGMKMS. The chain crosses the membrane as a helical span at residues 298–318; the sequence is SIIGVLVARYVLLPMSGVLIV. At 319-331 the chain is on the lumenal side; it reads RGAYKLDLVTSEP. A helical membrane pass occupies residues 332-352; sequence LYQFVLLLQYAVPPAMNLGTI. Topologically, residues 353 to 364 are cytoplasmic; that stretch reads TQLFGTGESECS. Residues 365-385 form a helical membrane-spanning segment; sequence VIMLWTYSLASIALTVWPTFF. Residues 386-390 lie on the Lumenal side of the membrane; it reads MWLVA.

It belongs to the auxin efflux carrier (TC 2.A.69.2) family. In terms of tissue distribution, expressed in seedlings, rosette and cauline leaves, flowers and siliques.

Its subcellular location is the endoplasmic reticulum membrane. In terms of biological role, involved in cellular auxin homeostasis by regulating auxin metabolism. Regulates intracellular auxin accumulation at the endoplasmic reticulum and thus auxin availability for nuclear auxin signaling. The chain is Protein PIN-LIKES 3 (PILS3) from Arabidopsis thaliana (Mouse-ear cress).